The following is a 456-amino-acid chain: MTHQVHIIGGGMAGTEAAWQLARRGIRVRLSEMRGGGDTTPAHNGDGLAELVCSNSFRSDDDEKNAVGLLHYEMRQCDSLLMAAAAKARVPAGSALAVDRDVFSAEVEAALRAQPTLEIVRERVDVLPSDGLTIVATGPLTAPSLANSIGSATGADSLAFFDAIAPIVYRDSIDMGVAWMASRWDKGAEASLAMGGDGRDYINCPMTRDQYLAFREELLAGEKTEFKEWEANTPYFDGCMPIEVMAARGEETLRFGPMKPVGLDNPHWATAEHPNGRWPYAVVQLRQDNKLGTLWNMVGFQTKLKHAEQVRVFRTIPGLENAEFARLGGLHRNTFLNSPTLLDRQLRLKSAPNVRFAGQITGCEGYVESGSVGMLAGLMVAAQIAGLDWSPPPRTTALGALLAHITGDAEAESFQPMNVNFGLFSPVDASVKKKVRKEAYTARAKADLSDWIATLA.

Residue 9-14 coordinates FAD; sequence GGGMAG.

Belongs to the MnmG family. TrmFO subfamily. The cofactor is FAD.

It is found in the cytoplasm. The enzyme catalyses uridine(54) in tRNA + (6R)-5,10-methylene-5,6,7,8-tetrahydrofolate + NADH + H(+) = 5-methyluridine(54) in tRNA + (6S)-5,6,7,8-tetrahydrofolate + NAD(+). It catalyses the reaction uridine(54) in tRNA + (6R)-5,10-methylene-5,6,7,8-tetrahydrofolate + NADPH + H(+) = 5-methyluridine(54) in tRNA + (6S)-5,6,7,8-tetrahydrofolate + NADP(+). Functionally, catalyzes the folate-dependent formation of 5-methyl-uridine at position 54 (M-5-U54) in all tRNAs. This is Methylenetetrahydrofolate--tRNA-(uracil-5-)-methyltransferase TrmFO from Novosphingobium aromaticivorans (strain ATCC 700278 / DSM 12444 / CCUG 56034 / CIP 105152 / NBRC 16084 / F199).